We begin with the raw amino-acid sequence, 714 residues long: Polyribonucleotide nucleotidyltransferase (714 aa).

Mg(2+)-binding residues include aspartate 488 and aspartate 494. Residues proline 555–isoleucine 614 enclose the KH domain. The 69-residue stretch at glycine 624–lysine 692 folds into the S1 motif domain.

This sequence belongs to the polyribonucleotide nucleotidyltransferase family. Requires Mg(2+) as cofactor.

Its subcellular location is the cytoplasm. It catalyses the reaction RNA(n+1) + phosphate = RNA(n) + a ribonucleoside 5'-diphosphate. Its function is as follows. Involved in mRNA degradation. Catalyzes the phosphorolysis of single-stranded polyribonucleotides processively in the 3'- to 5'-direction. This chain is Polyribonucleotide nucleotidyltransferase, found in Brucella abortus biovar 1 (strain 9-941).